Here is a 648-residue protein sequence, read N- to C-terminus: Nucleoside triphosphatase I (648 aa).

The Helicase ATP-binding domain occupies Phe-48–Asn-213. Trp-61–Thr-68 contacts ATP. Positions Asp-151–His-154 match the DEXH box motif. A Helicase C-terminal domain is found at Tyr-379–Lys-542. Residues Asp-468–Ile-534 form a binding to the cap-specific mRNA (nucleoside-2'-O-)-methyltransferase region.

It belongs to the helicase family. NPH I subfamily. In terms of assembly, monomer. Interacts (via C-terminus) with RAP94 (via N-terminus). Interacts with the cap-specific mRNA (nucleoside-2'-O-)-methyltransferase.

The protein localises to the virion. The enzyme catalyses a ribonucleoside 5'-triphosphate + H2O = a ribonucleoside 5'-diphosphate + phosphate + H(+). In terms of biological role, DNA-dependent ATPase required for providing the needed energy to achieve the termination of early transcripts. Acts in concert with the RAP94 subunit of the virion RNA polymerase and the capping enzyme/VTF to catalyze release of UUUUUNU-containing nascent RNA from the elongation complex. NPH-I must bind ssDNA in order to exhibit ATPase activity. This Choristoneura fumiferana (Spruce budworm moth) protein is Nucleoside triphosphatase I (NPH1).